The primary structure comprises 217 residues: Probable transaldolase (217 aa).

The active-site Schiff-base intermediate with substrate is the lysine 83.

Belongs to the transaldolase family. Type 3B subfamily.

The protein resides in the cytoplasm. The catalysed reaction is D-sedoheptulose 7-phosphate + D-glyceraldehyde 3-phosphate = D-erythrose 4-phosphate + beta-D-fructose 6-phosphate. It functions in the pathway carbohydrate degradation; pentose phosphate pathway; D-glyceraldehyde 3-phosphate and beta-D-fructose 6-phosphate from D-ribose 5-phosphate and D-xylulose 5-phosphate (non-oxidative stage): step 2/3. Its function is as follows. Transaldolase is important for the balance of metabolites in the pentose-phosphate pathway. This chain is Probable transaldolase, found in Phenylobacterium zucineum (strain HLK1).